Consider the following 328-residue polypeptide: Arabinose 5-phosphate isomerase KdsD (328 aa).

In terms of domain architecture, SIS spans 41-184 (ACEKMFNCTG…AVALLKARGF (144 aa)). Residues 75–76 (GT), H82, H88, 114–123 (ALIPVLKRLH), and 148–150 (KVP) each bind substrate. Residue H82 participates in Zn(2+) binding. The 59-residue stretch at 210–268 (MHTGDEIPHVNKHATLRDALLEITRKNLGMTVICDESMKIDGIFTDGDLRRMFDMGGDM) folds into the CBS 1 domain. E275 serves as a coordination point for substrate. Positions 277 to 328 (MTPGGIRVRPGILAVDALNLMQSRHITSVLVADGDQLLGVLHMHDLLRAGVV) constitute a CBS 2 domain.

The protein belongs to the SIS family. GutQ/KpsF subfamily. As to quaternary structure, homotetramer.

It carries out the reaction D-arabinose 5-phosphate = D-ribulose 5-phosphate. It participates in carbohydrate biosynthesis; 3-deoxy-D-manno-octulosonate biosynthesis; 3-deoxy-D-manno-octulosonate from D-ribulose 5-phosphate: step 1/3. It functions in the pathway bacterial outer membrane biogenesis; lipopolysaccharide biosynthesis. Involved in the biosynthesis of 3-deoxy-D-manno-octulosonate (KDO), a unique 8-carbon sugar component of lipopolysaccharides (LPSs). Catalyzes the reversible aldol-ketol isomerization between D-ribulose 5-phosphate (Ru5P) and D-arabinose 5-phosphate (A5P). The protein is Arabinose 5-phosphate isomerase KdsD (kdsD) of Salmonella typhi.